The sequence spans 241 residues: Phosphoadenosine 5'-phosphosulfate reductase (241 aa).

The active-site Nucleophile; cysteine thiosulfonate intermediate is the cysteine 235.

Belongs to the PAPS reductase family. CysH subfamily.

Its subcellular location is the cytoplasm. It carries out the reaction [thioredoxin]-disulfide + sulfite + adenosine 3',5'-bisphosphate + 2 H(+) = [thioredoxin]-dithiol + 3'-phosphoadenylyl sulfate. It participates in sulfur metabolism; hydrogen sulfide biosynthesis; sulfite from sulfate: step 3/3. Functionally, catalyzes the formation of sulfite from phosphoadenosine 5'-phosphosulfate (PAPS) using thioredoxin as an electron donor. The protein is Phosphoadenosine 5'-phosphosulfate reductase of Xanthomonas axonopodis pv. citri (strain 306).